We begin with the raw amino-acid sequence, 291 residues long: START domain-containing protein 10 (291 aa).

Met-1 carries the N-acetylmethionine modification. The disordered stretch occupies residues Met-1 to Glu-20. The START domain maps to Arg-14–Glu-224. N6-succinyllysine is present on residues Lys-94, Lys-197, and Lys-202. Ser-253 and Ser-259 each carry phosphoserine. The segment at Leu-260 to Thr-291 is disordered. Ser-284 is modified (phosphoserine; by CK2). Ser-289 is modified (phosphoserine).

Post-translationally, phosphorylation at Ser-284 by CK2 negatively regulates lipid transfer activity, possibly by decreasing membrane association.

The protein localises to the cell projection. Its subcellular location is the cilium. The protein resides in the flagellum. It is found in the cytoplasm. It localises to the membrane. In terms of biological role, may play metabolic roles in sperm maturation or fertilization. Phospholipid transfer protein that preferentially selects lipid species containing a palmitoyl or stearoyl chain on the sn-1 and an unsaturated fatty acyl chain (18:1 or 18:2) on the sn-2 position. Able to transfer phosphatidylcholine (PC) and phosphatidyetanolamline (PE) between membranes. This chain is START domain-containing protein 10 (STARD10), found in Homo sapiens (Human).